Here is a 424-residue protein sequence, read N- to C-terminus: Acetyl-CoA acetyltransferase, mitochondrial (424 aa).

The N-terminal 30 residues, 1–30, are a transit peptide targeting the mitochondrion; it reads MAALVALHGVVRRPLLRGLLQEVRCLERSY. An N6-acetyllysine; alternate modification is found at Lys63. Lys63 is modified (N6-succinyllysine; alternate). Lys75 bears the N6-succinyllysine mark. The active-site Acyl-thioester intermediate is the Cys123. N6-acetyllysine; alternate occurs at positions 171, 178, 187, and 199. An N6-succinyllysine; alternate mark is found at Lys171, Lys178, Lys187, and Lys199. Ser204 carries the post-translational modification Phosphoserine. Tyr216 is a CoA binding site. Residue Tyr216 coordinates K(+). N6-acetyllysine; alternate is present on residues Lys220 and Lys227. Residues Lys220 and Lys227 each carry the N6-succinyllysine; alternate modification. Position 240 is an N6-succinyllysine (Lys240). Lys242 carries the N6-acetyllysine; alternate modification. Lys242 carries the N6-succinyllysine; alternate modification. Residues Lys248 and Lys254 each carry the N6-acetyllysine modification. Residues 255-257 and Lys260 each bind CoA; that span reads RVD. Lys260 is modified (N6-acetyllysine; alternate). Lys260 carries the N6-succinyllysine; alternate modification. N6-succinyllysine occurs at positions 263 and 265. Lys270 bears the N6-acetyllysine mark. K(+)-binding residues include Ala277, Ala278, and Ala280. Ser281 lines the CoA pocket. Lys335 bears the N6-acetyllysine mark. K(+) is bound at residue Val378. The Proton donor/acceptor role is filled by Cys410.

This sequence belongs to the thiolase-like superfamily. Thiolase family. Homotetramer. In terms of processing, succinylation at Lys-265, adjacent to a coenzyme A binding site. Desuccinylated by SIRT5.

Its subcellular location is the mitochondrion. It catalyses the reaction 2 acetyl-CoA = acetoacetyl-CoA + CoA. The catalysed reaction is propanoyl-CoA + acetyl-CoA = 2-methyl-3-oxobutanoyl-CoA + CoA. It functions in the pathway lipid metabolism; fatty acid beta-oxidation. Activated by potassium ions, but not sodium ions. In terms of biological role, this is one of the enzymes that catalyzes the last step of the mitochondrial beta-oxidation pathway, an aerobic process breaking down fatty acids into acetyl-CoA. Using free coenzyme A/CoA, catalyzes the thiolytic cleavage of medium- to long-chain 3-oxoacyl-CoAs into acetyl-CoA and a fatty acyl-CoA shortened by two carbon atoms. The activity of the enzyme is reversible and it can also catalyze the condensation of two acetyl-CoA molecules into acetoacetyl-CoA. Thereby, it plays a major role in ketone body metabolism. This is Acetyl-CoA acetyltransferase, mitochondrial (Acat1) from Mus musculus (Mouse).